The following is an 89-amino-acid chain: Small ribosomal subunit protein uS15 (89 aa).

The protein belongs to the universal ribosomal protein uS15 family. As to quaternary structure, part of the 30S ribosomal subunit. Forms a bridge to the 50S subunit in the 70S ribosome, contacting the 23S rRNA.

One of the primary rRNA binding proteins, it binds directly to 16S rRNA where it helps nucleate assembly of the platform of the 30S subunit by binding and bridging several RNA helices of the 16S rRNA. Functionally, forms an intersubunit bridge (bridge B4) with the 23S rRNA of the 50S subunit in the ribosome. The chain is Small ribosomal subunit protein uS15 from Cyanothece sp. (strain PCC 7425 / ATCC 29141).